A 68-amino-acid chain; its full sequence is Alpha-conotoxin Lp1.1 (68 aa).

The signal sequence occupies residues 1–21 (MGMRMMFIMFMLVVLATTVVT). The propeptide occupies 22-48 (FTSDRALDAMNAAASNKASRLIALAVR). 2 cysteine pairs are disulfide-bonded: Cys50-Cys56 and Cys51-Cys64. A lacks the Ser-Xaa-Pro motif that is crucial for potent interaction with nAChR region spans residues 52–54 (ARA). Gly65 is modified (glycine amide). Positions 66 to 68 (GGR) are excised as a propeptide.

Belongs to the conotoxin A superfamily. Expressed by the venom duct.

Its subcellular location is the secreted. Its function is as follows. Alpha-conotoxins act on postsynaptic membranes, they bind to the nicotinic acetylcholine receptors (nAChR) and thus inhibit them. Synthetic peptide inhibits alpha-6/alpha-3/beta-2 and alpha-3/beta-2 nicotinic acetylcholine receptors and causes uncoordinated movement when intramuscularly injected into goldfish. Has a distinct nAChR binding mode from other alpha-conotoxins, due to a different three residue motif (Ala-Xaa-Ala instead of the conserved Ser-Xaa-Pro motif). The polypeptide is Alpha-conotoxin Lp1.1 (Conus leopardus (Leopard cone)).